Reading from the N-terminus, the 150-residue chain is Molybdopterin synthase catalytic subunit (150 aa).

Substrate contacts are provided by residues 37–39, 103–104, Lys-119, and 126–128; these read KVR, HR, and KRE. Residue Lys-119 forms a Glycyl lysine isopeptide (Lys-Gly) (interchain with G-Cter in MoaD) linkage.

It belongs to the MoaE family. As to quaternary structure, heterotetramer of 2 MoaD subunits and 2 MoaE subunits. Also stable as homodimer. The enzyme changes between these two forms during catalysis.

The catalysed reaction is 2 [molybdopterin-synthase sulfur-carrier protein]-C-terminal-Gly-aminoethanethioate + cyclic pyranopterin phosphate + H2O = molybdopterin + 2 [molybdopterin-synthase sulfur-carrier protein]-C-terminal Gly-Gly + 2 H(+). Its pathway is cofactor biosynthesis; molybdopterin biosynthesis. Converts molybdopterin precursor Z to molybdopterin. This requires the incorporation of two sulfur atoms into precursor Z to generate a dithiolene group. The sulfur is provided by MoaD. The chain is Molybdopterin synthase catalytic subunit (moaE) from Escherichia coli (strain K12).